A 202-amino-acid chain; its full sequence is U-Kazal-Dg21.2 (202 aa).

A signal peptide spans 1-20; the sequence is MKYFLWSAVTIFAIVNVVGA. The propeptide occupies 21–87; sequence KNSDFDPRCL…SFCQVEEDFD (67 aa). 3 consecutive Kazal-like domains span residues 23-77, 85-140, and 148-202; these read SDFD…KTLM, DFDS…ICRN, and IDPK…KGEC. Cystine bridges form between C29/C62, C33/C55, C91/C124, C95/C117, and C103/C138. A glycan (N-linked (GlcNAc...) asparagine) is linked at N140. Residues 142-202 constitute a propeptide that is removed on maturation; the sequence is SFKSELIDPK…NWTLIRKGEC (61 aa). 3 disulfide bridges follow: C154–C187, C158–C180, and C166–C202. N193 carries an N-linked (GlcNAc...) asparagine glycan.

As to expression, expressed by the venom gland.

Its subcellular location is the secreted. Its function is as follows. May act as a serine protease inhibitor, since it possess the kazal serine protease inhibitor signature. The recombinant peptide does not produce toxic effects on insects. The chain is U-Kazal-Dg21.2 from Dolopus genitalis (Giant Australian assassin fly).